We begin with the raw amino-acid sequence, 143 residues long: Holo-[acyl-carrier-protein] synthase (143 aa).

Residues Asp9 and Glu63 each coordinate Mg(2+).

This sequence belongs to the P-Pant transferase superfamily. AcpS family. The cofactor is Mg(2+).

It is found in the cytoplasm. It catalyses the reaction apo-[ACP] + CoA = holo-[ACP] + adenosine 3',5'-bisphosphate + H(+). Transfers the 4'-phosphopantetheine moiety from coenzyme A to a Ser of acyl-carrier-protein. In Burkholderia mallei (strain NCTC 10247), this protein is Holo-[acyl-carrier-protein] synthase.